Consider the following 150-residue polypeptide: Cytochrome c oxidase subunit 5A, mitochondrial (150 aa).

The N-terminal 41 residues, 1–41 (MLGAALRRCAVAATSRAGPRGLLHSAPNPGPAAAIQSVRCY), are a transit peptide targeting the mitochondrion. The SIFI-degron signature appears at 2–17 (LGAALRRCAVAATSRA). An N6-acetyllysine mark is found at Lys-87 and Lys-113. A Phosphothreonine modification is found at Thr-141.

Belongs to the cytochrome c oxidase subunit 5A family. In terms of assembly, component of the cytochrome c oxidase (complex IV, CIV), a multisubunit enzyme composed of 14 subunits. The complex is composed of a catalytic core of 3 subunits MT-CO1, MT-CO2 and MT-CO3, encoded in the mitochondrial DNA, and 11 supernumerary subunits COX4I, COX5A, COX5B, COX6A, COX6B, COX6C, COX7A, COX7B, COX7C, COX8 and NDUFA4, which are encoded in the nuclear genome. The complex exists as a monomer or a dimer and forms supercomplexes (SCs) in the inner mitochondrial membrane with NADH-ubiquinone oxidoreductase (complex I, CI) and ubiquinol-cytochrome c oxidoreductase (cytochrome b-c1 complex, complex III, CIII), resulting in different assemblies (supercomplex SCI(1)III(2)IV(1) and megacomplex MCI(2)III(2)IV(2)). Interacts with AFG1L. Interacts with RAB5IF. Post-translationally, in response to mitochondrial stress, the precursor protein is ubiquitinated by the SIFI complex in the cytoplasm before mitochondrial import, leading to its degradation. Within the SIFI complex, UBR4 initiates ubiquitin chain that are further elongated or branched by KCMF1.

It is found in the mitochondrion inner membrane. Its pathway is energy metabolism; oxidative phosphorylation. Functionally, component of the cytochrome c oxidase, the last enzyme in the mitochondrial electron transport chain which drives oxidative phosphorylation. The respiratory chain contains 3 multisubunit complexes succinate dehydrogenase (complex II, CII), ubiquinol-cytochrome c oxidoreductase (cytochrome b-c1 complex, complex III, CIII) and cytochrome c oxidase (complex IV, CIV), that cooperate to transfer electrons derived from NADH and succinate to molecular oxygen, creating an electrochemical gradient over the inner membrane that drives transmembrane transport and the ATP synthase. Cytochrome c oxidase is the component of the respiratory chain that catalyzes the reduction of oxygen to water. Electrons originating from reduced cytochrome c in the intermembrane space (IMS) are transferred via the dinuclear copper A center (CU(A)) of subunit 2 and heme A of subunit 1 to the active site in subunit 1, a binuclear center (BNC) formed by heme A3 and copper B (CU(B)). The BNC reduces molecular oxygen to 2 water molecules using 4 electrons from cytochrome c in the IMS and 4 protons from the mitochondrial matrix. In Saguinus labiatus (Red-chested mustached tamarin), this protein is Cytochrome c oxidase subunit 5A, mitochondrial (COX5A).